Here is a 299-residue protein sequence, read N- to C-terminus: uncharacterized protein (299 aa).

This is an uncharacterized protein from Acanthamoeba polyphaga mimivirus (APMV).